A 557-amino-acid chain; its full sequence is 2-succinyl-5-enolpyruvyl-6-hydroxy-3-cyclohexene-1-carboxylate synthase (557 aa).

The protein belongs to the TPP enzyme family. MenD subfamily. In terms of assembly, homodimer. It depends on Mg(2+) as a cofactor. Mn(2+) serves as cofactor. The cofactor is thiamine diphosphate.

It catalyses the reaction isochorismate + 2-oxoglutarate + H(+) = 5-enolpyruvoyl-6-hydroxy-2-succinyl-cyclohex-3-ene-1-carboxylate + CO2. Its pathway is quinol/quinone metabolism; 1,4-dihydroxy-2-naphthoate biosynthesis; 1,4-dihydroxy-2-naphthoate from chorismate: step 2/7. The protein operates within quinol/quinone metabolism; menaquinone biosynthesis. Its function is as follows. Catalyzes the thiamine diphosphate-dependent decarboxylation of 2-oxoglutarate and the subsequent addition of the resulting succinic semialdehyde-thiamine pyrophosphate anion to isochorismate to yield 2-succinyl-5-enolpyruvyl-6-hydroxy-3-cyclohexene-1-carboxylate (SEPHCHC). This Staphylococcus aureus (strain USA300) protein is 2-succinyl-5-enolpyruvyl-6-hydroxy-3-cyclohexene-1-carboxylate synthase.